A 140-amino-acid chain; its full sequence is Putative pre-16S rRNA nuclease (140 aa).

The protein belongs to the YqgF nuclease family.

It localises to the cytoplasm. Functionally, could be a nuclease involved in processing of the 5'-end of pre-16S rRNA. The chain is Putative pre-16S rRNA nuclease from Pasteurella multocida (strain Pm70).